The chain runs to 363 residues: UDP-N-acetylglucosamine--N-acetylmuramyl-(pentapeptide) pyrophosphoryl-undecaprenol N-acetylglucosamine transferase (363 aa).

UDP-N-acetyl-alpha-D-glucosamine is bound by residues 10 to 12 (TGG), Asn124, Ser195, and Gln295.

Belongs to the glycosyltransferase 28 family. MurG subfamily.

It localises to the cell membrane. It carries out the reaction di-trans,octa-cis-undecaprenyl diphospho-N-acetyl-alpha-D-muramoyl-L-alanyl-D-glutamyl-meso-2,6-diaminopimeloyl-D-alanyl-D-alanine + UDP-N-acetyl-alpha-D-glucosamine = di-trans,octa-cis-undecaprenyl diphospho-[N-acetyl-alpha-D-glucosaminyl-(1-&gt;4)]-N-acetyl-alpha-D-muramoyl-L-alanyl-D-glutamyl-meso-2,6-diaminopimeloyl-D-alanyl-D-alanine + UDP + H(+). Its pathway is cell wall biogenesis; peptidoglycan biosynthesis. Its function is as follows. Cell wall formation. Catalyzes the transfer of a GlcNAc subunit on undecaprenyl-pyrophosphoryl-MurNAc-pentapeptide (lipid intermediate I) to form undecaprenyl-pyrophosphoryl-MurNAc-(pentapeptide)GlcNAc (lipid intermediate II). This Bacillus subtilis (strain 168) protein is UDP-N-acetylglucosamine--N-acetylmuramyl-(pentapeptide) pyrophosphoryl-undecaprenol N-acetylglucosamine transferase.